Consider the following 270-residue polypeptide: Bis(5'-nucleosyl)-tetraphosphatase, symmetrical (270 aa).

The protein belongs to the Ap4A hydrolase family.

It carries out the reaction P(1),P(4)-bis(5'-adenosyl) tetraphosphate + H2O = 2 ADP + 2 H(+). Its function is as follows. Hydrolyzes diadenosine 5',5'''-P1,P4-tetraphosphate to yield ADP. This chain is Bis(5'-nucleosyl)-tetraphosphatase, symmetrical, found in Cellvibrio japonicus (strain Ueda107) (Pseudomonas fluorescens subsp. cellulosa).